The following is a 740-amino-acid chain: MMTNGVVHANLFGIKDWVTPYKIAVLVLLNEMGRTGEGAVSLVERRKLNQLLLPLLQGPDITLSKLYKLIEESCPQLANSVQIRIKLMAEGELKDMEQFFDDLSDSFSGTEPEVHKTSVVGLFLRHMILAYSKLSFSQVFKLYTALQQYFQNGEKKTVEDADMDREDGEKQMEKEELDVSVREEEVSCSGPLSQKQAEFFLSQQAALLKNDETKALTPASLQKELNNLLKFNPDFAEAHYLSYLNNLRVQDVFSSTHSLLHYFDRLILTGAEGKSNGEEGYGRSLRYAALNLAALHCRFGHYQQAELALQEAIRIAQESNDHVCLQHCLSWLYVLGQKRADSYVLLEHSVKKAVHFGLPYLASLGIQSLVQQRAFAGKTANKLMDALKDSDLLHWKHSLSELIDISIAQKTAIWRLYGRSTMALQQAQMLLSMNSLESLNAGVQQNNTESFAVALCHLAELHAEQGCFAAAGEVLKHLKDRFPPNSQHAQLWMLCDQKIQFDRAMNDGKFHLADSLVTGITALNGIEGVYRKAVVLQAQNQMTEAHKLLQKLLTYCQKLKNTEMVISVLLSVAELYWRSSSPTIAMPVLLEALALSKEYRLQYLASETVLNLAYAQLILGIPEQALTLLHMAIEPILADGAVLDKGRAMFLVSKCQVASAASYDPVKKAEALEAAIQNLSEAKNYFAQVDCRERIRDVAYFQARLYHALGKTQERNHCAMIFRQLHQELPAHGVPLINHL.

Ser180 bears the Phosphoserine mark. TPR repeat units lie at residues 194–234 (QKQA…FNPD), 235–285 (FAEA…GRSL), 286–322 (RYAA…SNDH), 323–363 (VCLQ…YLAS), 364–403 (LGIQ…SELI), 404–451 (DISI…TESF), 452–485 (AVAL…FPPN), 486–525 (SQHA…ALNG), 526–565 (IEGV…TEMV), 566–605 (ISVL…QYLA), 606–645 (SETV…VLDK), 646–681 (GRAM…NLSE), and 682–721 (AKNY…CAMI). Thr217 is subject to Phosphothreonine.

It belongs to the APC5 family. As to quaternary structure, the mammalian APC/C is composed at least of 14 distinct subunits ANAPC1, ANAPC2, CDC27/APC3, ANAPC4, ANAPC5, CDC16/APC6, ANAPC7, CDC23/APC8, ANAPC10, ANAPC11, CDC26/APC12, ANAPC13, ANAPC15 and ANAPC16 that assemble into a complex of at least 19 chains with a combined molecular mass of around 1.2 MDa; APC/C interacts with FZR1 and FBXO5.

It is found in the nucleus. Its subcellular location is the cytoplasm. It localises to the cytoskeleton. The protein resides in the spindle. The protein operates within protein modification; protein ubiquitination. In terms of biological role, component of the anaphase promoting complex/cyclosome (APC/C), a cell cycle-regulated E3 ubiquitin ligase that controls progression through mitosis and the G1 phase of the cell cycle. The APC/C complex acts by mediating ubiquitination and subsequent degradation of target proteins: it mainly mediates the formation of 'Lys-11'-linked polyubiquitin chains and, to a lower extent, the formation of 'Lys-48'- and 'Lys-63'-linked polyubiquitin chains. The APC/C complex catalyzes assembly of branched 'Lys-11'-/'Lys-48'-linked branched ubiquitin chains on target proteins. The protein is Anaphase-promoting complex subunit 5 (Anapc5) of Mus musculus (Mouse).